Reading from the N-terminus, the 494-residue chain is Argininosuccinate synthase, chloroplastic (494 aa).

A chloroplast-targeting transit peptide spans 1 to 73 (MAEISATSFP…SRSCKNQAIR (73 aa)). Ala-74 carries the post-translational modification N-acetylalanine. ATP-binding positions include 102 to 110 (AYSGGLDTS) and Ala-129. 2 residues coordinate L-citrulline: Tyr-181 and Ser-186. Gly-211 contributes to the ATP binding site. Thr-213, Asn-217, and Asp-218 together coordinate L-aspartate. Residue Asn-217 participates in L-citrulline binding. L-citrulline-binding residues include Arg-221, Ser-270, Ser-279, Glu-355, and Tyr-367.

Belongs to the argininosuccinate synthase family. Type 1 subfamily. Homotetramer.

The protein resides in the plastid. It is found in the chloroplast. It carries out the reaction L-citrulline + L-aspartate + ATP = 2-(N(omega)-L-arginino)succinate + AMP + diphosphate + H(+). Its pathway is amino-acid biosynthesis; L-arginine biosynthesis; L-arginine from L-ornithine and carbamoyl phosphate: step 2/3. The protein is Argininosuccinate synthase, chloroplastic of Arabidopsis thaliana (Mouse-ear cress).